The following is a 589-amino-acid chain: Aspartate--tRNA ligase (589 aa).

Position 174 (Glu-174) interacts with L-aspartate. The segment at 198–201 (QLFK) is aspartate. Arg-220 lines the L-aspartate pocket. ATP-binding positions include 220–222 (RDE) and Gln-229. L-aspartate is bound at residue His-448. ATP is bound at residue Glu-483. Arg-490 contacts L-aspartate. 535-538 (GIDR) lines the ATP pocket.

The protein belongs to the class-II aminoacyl-tRNA synthetase family. Type 1 subfamily. Homodimer.

The protein resides in the cytoplasm. The catalysed reaction is tRNA(Asp) + L-aspartate + ATP = L-aspartyl-tRNA(Asp) + AMP + diphosphate. Functionally, catalyzes the attachment of L-aspartate to tRNA(Asp) in a two-step reaction: L-aspartate is first activated by ATP to form Asp-AMP and then transferred to the acceptor end of tRNA(Asp). This is Aspartate--tRNA ligase from Xylella fastidiosa (strain 9a5c).